A 451-amino-acid polypeptide reads, in one-letter code: F-box/kelch-repeat protein At1g74510 (451 aa).

Residues 93–139 (SSPVTRLDQNALLNCLAHCSLSDFGSIASTNRTFRSLIKDSELYRLR) form the F-box domain. 5 Kelch repeats span residues 137-188 (RLRR…KESL), 193-236 (ELLV…SLGE), 237-284 (IAVI…FMDG), 286-333 (FYCI…DQAK), and 349-395 (AVVK…GMAF).

This Arabidopsis thaliana (Mouse-ear cress) protein is F-box/kelch-repeat protein At1g74510.